We begin with the raw amino-acid sequence, 115 residues long: Holo-[acyl-carrier-protein] synthase (115 aa).

Mg(2+)-binding residues include aspartate 6 and glutamate 51.

Belongs to the P-Pant transferase superfamily. AcpS family. Requires Mg(2+) as cofactor.

The protein resides in the cytoplasm. The enzyme catalyses apo-[ACP] + CoA = holo-[ACP] + adenosine 3',5'-bisphosphate + H(+). Its function is as follows. Transfers the 4'-phosphopantetheine moiety from coenzyme A to a Ser of acyl-carrier-protein. The chain is Holo-[acyl-carrier-protein] synthase from Campylobacter jejuni subsp. jejuni serotype O:6 (strain 81116 / NCTC 11828).